Here is a 183-residue protein sequence, read N- to C-terminus: Cell division protein ZapC (183 aa).

This sequence belongs to the ZapC family. In terms of assembly, interacts directly with FtsZ.

The protein resides in the cytoplasm. Contributes to the efficiency of the cell division process by stabilizing the polymeric form of the cell division protein FtsZ. Acts by promoting interactions between FtsZ protofilaments and suppressing the GTPase activity of FtsZ. This is Cell division protein ZapC from Xenorhabdus bovienii (strain SS-2004) (Xenorhabdus nematophila subsp. bovienii).